A 78-amino-acid chain; its full sequence is MSDFWHKLGCCVVEKPQPKKRRRRIDRSMIGEPMNFVHLTHIGSGDMAAGEGLPMTGAVQEMRSKGGRERQWSSSRVL.

Residues cysteine 10 and cysteine 11 are each lipidated (S-palmitoyl cysteine). Positions 30–43 (IGEPMNFVHLTHIG) constitute a CRIB domain.

It belongs to the CDC42SE/SPEC family.

Its subcellular location is the cytoplasm. It is found in the cytoskeleton. The protein resides in the cell membrane. In terms of biological role, probably involved in the organization of the actin cytoskeleton by acting downstream of CDC42, inducing actin filament assembly. This is CDC42 small effector protein 1 (CDC42SE1) from Gallus gallus (Chicken).